The primary structure comprises 507 residues: Maturase K (507 aa).

Belongs to the intron maturase 2 family. MatK subfamily.

It is found in the plastid. The protein resides in the chloroplast. Its function is as follows. Usually encoded in the trnK tRNA gene intron. Probably assists in splicing its own and other chloroplast group II introns. This chain is Maturase K, found in Lyonia ligustrina (Maleberry).